Here is a 286-residue protein sequence, read N- to C-terminus: Probable 4-deoxy-4-formamido-L-arabinose-phosphoundecaprenol deformylase ArnD (286 aa).

Positions 1-248 (MGTKLGVPNL…IAINEGINFC (248 aa)) constitute a NodB homology domain.

It belongs to the polysaccharide deacetylase family. ArnD deformylase subfamily.

It catalyses the reaction 4-deoxy-4-formamido-alpha-L-arabinopyranosyl di-trans,octa-cis-undecaprenyl phosphate + H2O = 4-amino-4-deoxy-alpha-L-arabinopyranosyl di-trans,octa-cis-undecaprenyl phosphate + formate. It participates in glycolipid biosynthesis; 4-amino-4-deoxy-alpha-L-arabinose undecaprenyl phosphate biosynthesis; 4-amino-4-deoxy-alpha-L-arabinose undecaprenyl phosphate from UDP-4-deoxy-4-formamido-beta-L-arabinose and undecaprenyl phosphate: step 2/2. It functions in the pathway bacterial outer membrane biogenesis; lipopolysaccharide biosynthesis. Functionally, catalyzes the deformylation of 4-deoxy-4-formamido-L-arabinose-phosphoundecaprenol to 4-amino-4-deoxy-L-arabinose-phosphoundecaprenol. The modified arabinose is attached to lipid A and is required for resistance to polymyxin and cationic antimicrobial peptides. This chain is Probable 4-deoxy-4-formamido-L-arabinose-phosphoundecaprenol deformylase ArnD, found in Wigglesworthia glossinidia brevipalpis.